Here is a 107-residue protein sequence, read N- to C-terminus: Keratin, type I cytoskeletal 20 (107 aa).

The tract at residues 1–7 (GNLWVGN) is head. The segment at 8-43 (EKMTMKNLNDRLASYLEKVRSLEQSNSKFELQIKQW) is coil 1A. In terms of domain architecture, IF rod spans 8–107 (EKMTMKNLND…ETERGIRLAV (100 aa)). Residues 44 to 61 (YESNTPGISRDHSAYLQQ) form a linker 1 region. Residues 62 to 107 (IQDLRNQIRDAQLQNARCVLQIDNAKLAAEDFRLKYETERGIRLAV) are coil 1B.

Belongs to the intermediate filament family. As to quaternary structure, heterotetramer of two type I and two type II keratins. Associates with KRT8.

Functionally, plays a significant role in maintaining keratin filament organization in intestinal epithelia. When phosphorylated, plays a role in the secretion of mucin in the small intestine. This Sus scrofa (Pig) protein is Keratin, type I cytoskeletal 20.